Here is a 387-residue protein sequence, read N- to C-terminus: Exodeoxyribonuclease 7 large subunit (387 aa).

It belongs to the XseA family. In terms of assembly, heterooligomer composed of large and small subunits.

The protein localises to the cytoplasm. The enzyme catalyses Exonucleolytic cleavage in either 5'- to 3'- or 3'- to 5'-direction to yield nucleoside 5'-phosphates.. Its function is as follows. Bidirectionally degrades single-stranded DNA into large acid-insoluble oligonucleotides, which are then degraded further into small acid-soluble oligonucleotides. In Campylobacter jejuni subsp. jejuni serotype O:6 (strain 81116 / NCTC 11828), this protein is Exodeoxyribonuclease 7 large subunit.